The sequence spans 93 residues: Small ribosomal subunit protein uS19 (93 aa).

This sequence belongs to the universal ribosomal protein uS19 family.

Protein S19 forms a complex with S13 that binds strongly to the 16S ribosomal RNA. The sequence is that of Small ribosomal subunit protein uS19 from Lacticaseibacillus paracasei (strain ATCC 334 / BCRC 17002 / CCUG 31169 / CIP 107868 / KCTC 3260 / NRRL B-441) (Lactobacillus paracasei).